The sequence spans 205 residues: uncharacterized protein (205 aa).

Positions 1 to 25 (MSNNNNEAQQPVESTNVESQQNVVQ) are enriched in polar residues. The tract at residues 1-205 (MSNNNNEAQQ…TSDPAQQVEA (205 aa)) is disordered. The segment covering 32–79 (NENNDNNNNNNNNNNNNNNNNNNNNNNNNSNNNNNSSNNENNENNENN) has biased composition (low complexity). Positions 80 to 122 (SCEKSEQEKPKEPEEPVQEEKSKEPCDQQKVKENEPAEEKETE) are enriched in basic and acidic residues. Composition is skewed to low complexity over residues 123-132 (PAAPVEPENP) and 146-162 (QHQQ…NGES). The segment covering 170–185 (SENKKRSIDEAGDIKD) has biased composition (basic and acidic residues). Polar residues predominate over residues 194-205 (VETSDPAQQVEA).

This is an uncharacterized protein from Dictyostelium discoideum (Social amoeba).